Consider the following 211-residue polypeptide: Pyridoxine/pyridoxamine 5'-phosphate oxidase (211 aa).

Substrate contacts are provided by residues 7–10 (RREY) and Lys65. FMN-binding positions include 60–65 (RIVLLK), 75–76 (YT), Arg81, Lys82, and Gln104. Substrate is bound by residues Tyr122, Arg126, and Ser130. FMN-binding positions include 139–140 (QS) and Trp184. A substrate-binding site is contributed by 190-192 (RLH). Residue Arg194 coordinates FMN.

The protein belongs to the pyridoxamine 5'-phosphate oxidase family. As to quaternary structure, homodimer. FMN serves as cofactor.

It catalyses the reaction pyridoxamine 5'-phosphate + O2 + H2O = pyridoxal 5'-phosphate + H2O2 + NH4(+). The enzyme catalyses pyridoxine 5'-phosphate + O2 = pyridoxal 5'-phosphate + H2O2. Its pathway is cofactor metabolism; pyridoxal 5'-phosphate salvage; pyridoxal 5'-phosphate from pyridoxamine 5'-phosphate: step 1/1. It participates in cofactor metabolism; pyridoxal 5'-phosphate salvage; pyridoxal 5'-phosphate from pyridoxine 5'-phosphate: step 1/1. Functionally, catalyzes the oxidation of either pyridoxine 5'-phosphate (PNP) or pyridoxamine 5'-phosphate (PMP) into pyridoxal 5'-phosphate (PLP). This Vibrio atlanticus (strain LGP32) (Vibrio splendidus (strain Mel32)) protein is Pyridoxine/pyridoxamine 5'-phosphate oxidase.